Here is a 330-residue protein sequence, read N- to C-terminus: Serine/threonine-protein phosphatase PP1-alpha catalytic subunit (330 aa).

Ser-2 carries the post-translational modification N-acetylserine. A phosphoserine mark is found at Ser-2 and Ser-22. The Mn(2+) site is built by Asp-64, His-66, Asp-92, and Asn-124. Residue His-125 is the Proton donor of the active site. Positions 173 and 248 each coordinate Mn(2+). An N6-acetyllysine modification is found at Lys-305. At Tyr-306 the chain carries Phosphotyrosine. A disordered region spans residues 306-330 (YGQFSGLNPGGRPITPPRNSAKAKK). Phosphothreonine is present on Thr-320. Position 325 is a phosphoserine (Ser-325).

This sequence belongs to the PPP phosphatase family. PP-1 subfamily. As to quaternary structure, PP1 comprises a catalytic subunit, PPP1CA, PPP1CB or PPP1CC, which is folded into its native form by inhibitor 2 and glycogen synthetase kinase 3, and then complexed to one or several targeting or regulatory subunits. PPP1R12A, PPP1R12B and PPP1R12C mediate binding to myosin. PPP1R3A (in skeletal muscle), PPP1R3B (in liver), PPP1R3C, PPP1R3D and PPP1R3F (in brain) mediate binding to glycogen. Interacts with PPP1R15A and PPP1R15B; the interactions mediate binding to EIF2S1. Part of a complex containing PPP1R15B, PP1 and NCK1/2. Interacts with PPP1R9A, PPP1R9B and PPP1R7. Interacts with YLPM1. Forms a complex with ILF2, ILF3, YLPM1, KHDRBS1, RBMX and NCOA5. Interacts with NOM1 and PPP1R8. Interacts with PPP1R16B. Interacts with RPSA only in the presence of PPP1R16B. Component of the PNUTS-PP1 phosphatase complex, composed of PPP1R10/PNUTS, TOX4, WDR82, and PPP1CA or PPP1CB or PPP1CC. Interacts with PPP1R10/PNUTS and PPP1R8. Interacts with WDR82 in the presence of PPP1R10/PNUTS. Interacts with PPP1R39. transition from mitosis into interphase. Interacts with TRIM28; the interaction dephosphorylates TRIM28 on 'Ser-824' and forms a complex at the p21 promoter site. Interacts with NEK2. Interacts with PHACTR4; which acts as an activator of PP1 activity. Interacts with FER; this promotes phosphorylation at Thr-320. Interacts with BTBD10. Interacts with KCTD20. Interacts with FOXP3. Interacts with CENPA. Interacts with ATG16L1. Found in a complex with PPP1CA, PPP1CC, SHC1 and PEAK1. Interacts with tensin TNS1. Interacts with SAXO4, PPP1R21, PPP1R26, PPP1R27, PPP1R35, PPP1R36, PPP1R37, SH3RF2, ELFN1 and ELFN2. Interacts with TPRN; the interaction results in inhibition of PPC1A phosphatase activity. Interacts with SKA1 (via C-terminus); the interaction is direct and required for the recruitment of PP1 to the kinetochore. Interacts with the KNL1 complex subunit KNL1; the interaction is direct and mutually exclusive with KNL1 binding to microtubules. Component of the SHOC2-MRAS-PP1c (SMP) complex consisting of SHOC2, GTP-bound M-Ras/MRAS and the catalytic subunit of protein phosphatase 1 (either PPP1CA, PPP1CB or PPP1CC). SHOC2 and PP1c preferably bind M-Ras/MRAS, but they also bind K-Ras/KRAS, N-Ras/NRAS and H-Ras/HRAS; these interactions are GTP-dependent and both SHOC2 and PP1c are required to form a stable complex. Interacts with SHOC2 in the absence of Ras GTPases. It depends on Mn(2+) as a cofactor. Post-translationally, phosphorylated. Dephosphorylated at Thr-320 in the presence of ionizing radiation.

The protein resides in the cytoplasm. Its subcellular location is the nucleus. It is found in the nucleoplasm. It localises to the nucleolus. The enzyme catalyses O-phospho-L-seryl-[protein] + H2O = L-seryl-[protein] + phosphate. It catalyses the reaction O-phospho-L-threonyl-[protein] + H2O = L-threonyl-[protein] + phosphate. In terms of biological role, protein phosphatase that associates with over 200 regulatory proteins to form highly specific holoenzymes which dephosphorylate hundreds of biological targets. Protein phosphatase 1 (PP1) is essential for cell division, transcription elongation, and participates in the regulation of glycogen metabolism, muscle contractility and protein synthesis. Involved in regulation of ionic conductances and long-term synaptic plasticity. May play an important role in dephosphorylating substrates such as the postsynaptic density-associated Ca(2+)/calmodulin dependent protein kinase II. Catalytic component of the PNUTS-PP1 protein phosphatase complex, a protein phosphatase 1 (PP1) complex that promotes RNA polymerase II transcription pause-release, allowing transcription elongation: the PNUTS-PP1 complex mediates the release of RNA polymerase II from promoter-proximal region of genes by catalyzing dephosphorylation of proteins involved in transcription, such as AFF4, CDK9, MEPCE, INTS12, NCBP1, POLR2M/GDOWN1 and SUPT6H. The PNUTS-PP1 complex also regulates transcription termination by mediating dephosphorylation of SUPT5H in termination zones downstream of poly(A) sites, thereby promoting deceleration of RNA polymerase II transcription. PNUTS-PP1 complex is also involved in the response to replication stress by mediating dephosphorylation of POLR2A at 'Ser-5' of the CTD, promoting RNA polymerase II degradation. PNUTS-PP1 also plays a role in the control of chromatin structure and cell cycle progression during the transition from mitosis into interphase. Regulates NEK2 function in terms of kinase activity and centrosome number and splitting, both in the presence and absence of radiation-induced DNA damage. Regulator of neural tube and optic fissure closure, and enteric neural crest cell (ENCCs) migration during development. In balance with CSNK1D and CSNK1E, determines the circadian period length, through the regulation of the speed and rhythmicity of PER1 and PER2 phosphorylation. May dephosphorylate CSNK1D and CSNK1E. Dephosphorylates the 'Ser-418' residue of FOXP3 in regulatory T-cells (Treg) from patients with rheumatoid arthritis, thereby inactivating FOXP3 and rendering Treg cells functionally defective. Dephosphorylates CENPA. Dephosphorylates the 'Ser-139' residue of ATG16L1 causing dissociation of ATG12-ATG5-ATG16L1 complex, thereby inhibiting autophagy. Together with PPP1CC (PP1-gamma subunit), dephosphorylates IFIH1/MDA5 and RIG-I leading to their activation and a functional innate immune response. Core component of the SHOC2-MRAS-PP1c (SMP) holophosphatase complex that regulates the MAPK pathway activation. The SMP complex specifically dephosphorylates the inhibitory phosphorylation at 'Ser-259' of RAF1 kinase, 'Ser-365' of BRAF kinase and 'Ser-214' of ARAF kinase, stimulating their kinase activities. The SMP complex enhances the dephosphorylation activity and substrate specificity of PP1c. This chain is Serine/threonine-protein phosphatase PP1-alpha catalytic subunit (PPP1CA), found in Canis lupus familiaris (Dog).